The following is a 254-amino-acid chain: 3-deoxy-manno-octulosonate cytidylyltransferase (254 aa).

Belongs to the KdsB family.

The protein resides in the cytoplasm. The enzyme catalyses 3-deoxy-alpha-D-manno-oct-2-ulosonate + CTP = CMP-3-deoxy-beta-D-manno-octulosonate + diphosphate. Its pathway is nucleotide-sugar biosynthesis; CMP-3-deoxy-D-manno-octulosonate biosynthesis; CMP-3-deoxy-D-manno-octulosonate from 3-deoxy-D-manno-octulosonate and CTP: step 1/1. It functions in the pathway bacterial outer membrane biogenesis; lipopolysaccharide biosynthesis. In terms of biological role, activates KDO (a required 8-carbon sugar) for incorporation into bacterial lipopolysaccharide in Gram-negative bacteria. The chain is 3-deoxy-manno-octulosonate cytidylyltransferase from Bordetella bronchiseptica (strain ATCC BAA-588 / NCTC 13252 / RB50) (Alcaligenes bronchisepticus).